The primary structure comprises 288 residues: Long chain fatty acid elongase 1 (288 aa).

7 helical membrane-spanning segments follow: residues 39–59 (FFAD…VVVF), 73–93 (LTIP…AGAV), 126–146 (WVWL…FLVL), 150–170 (PLMF…WYSH), 180–197 (GIYL…YYFL), 217–237 (IVQF…MHFT), and 247–267 (VFKL…NFFL).

Belongs to the ELO family.

It localises to the membrane. The catalysed reaction is (6Z,9Z,12Z)-octadecatrienoyl-CoA + malonyl-CoA + H(+) = (8Z,11Z,14Z)-3-oxoeicosatrienoyl-CoA + CO2 + CoA. The enzyme catalyses (6Z,9Z,12Z,15Z)-octadecatetraenoyl-CoA + malonyl-CoA + H(+) = (8Z,11Z,14Z,17Z)-3-oxoicosatetraenoyl-CoA + CO2 + CoA. It catalyses the reaction (9Z)-hexadecenoyl-CoA + malonyl-CoA + H(+) = 3-oxo-(11Z)-octadecenoyl-CoA + CO2 + CoA. It participates in lipid metabolism; fatty acid biosynthesis. Functionally, catalyzes the first and rate-limiting reaction of the four reactions that constitute the long-chain fatty acids elongation cycle. Uses malonyl-CoA to add 2 carbons per cycle to the chain of long-chain fatty acids. Condensing enzyme that catalyzes the elongation of monounsaturated (MUFA) and polyunsaturated (PUFA) fatty acids that are involved in multiple biological processes as precursors of membrane lipids and lipid mediators. The polypeptide is Long chain fatty acid elongase 1 (Caenorhabditis elegans).